A 213-amino-acid polypeptide reads, in one-letter code: Octanoyltransferase (213 aa).

The BPL/LPL catalytic domain occupies 32-207 (ESTLDEIWLV…NILALLNNPD (176 aa)). Substrate is bound by residues 71 to 78 (RGGQVTYH), 138 to 140 (SLG), and 151 to 153 (GLA). Cys169 serves as the catalytic Acyl-thioester intermediate.

It belongs to the LipB family.

It is found in the cytoplasm. It catalyses the reaction octanoyl-[ACP] + L-lysyl-[protein] = N(6)-octanoyl-L-lysyl-[protein] + holo-[ACP] + H(+). Its pathway is protein modification; protein lipoylation via endogenous pathway; protein N(6)-(lipoyl)lysine from octanoyl-[acyl-carrier-protein]: step 1/2. Its function is as follows. Catalyzes the transfer of endogenously produced octanoic acid from octanoyl-acyl-carrier-protein onto the lipoyl domains of lipoate-dependent enzymes. Lipoyl-ACP can also act as a substrate although octanoyl-ACP is likely to be the physiological substrate. The protein is Octanoyltransferase of Escherichia coli O17:K52:H18 (strain UMN026 / ExPEC).